Reading from the N-terminus, the 347-residue chain is uncharacterized protein (347 aa).

Disordered stretches follow at residues 1–40 (MAQE…SNSM), 72–92 (SCED…IQGS), 133–158 (SDST…QLTL), 173–209 (ENQK…QVSH), and 306–347 (EDPR…PPDF). The segment covering 15 to 25 (PGQNITETTTD) has biased composition (polar residues). The span at 143 to 154 (GDNKDKHPKEKT) shows a compositional bias: basic and acidic residues. Residues 179–194 (KDDDSVFPESAQEEDS) show a composition bias toward acidic residues. Over residues 195 to 209 (QLPSSSLPGMAQVSH) the composition is skewed to polar residues. Basic and acidic residues predominate over residues 306 to 318 (EDPREANERPREL). Basic residues predominate over residues 319–330 (ARKKRFSYRSKR).

This is an uncharacterized protein from Bos taurus (Bovine).